The following is a 275-amino-acid chain: AA9 family lytic polysaccharide monooxygenase AA9-X282 (275 aa).

The first 17 residues, 1-17 (MFTKLIIAASLAASVAA), serve as a signal peptide directing secretion. His-18 is a Cu(2+) binding site. Thr-20 bears the Phosphothreonine mark. Phosphoserine is present on residues Ser-43 and Ser-49. Residue Thr-50 is modified to Phosphothreonine. The residue at position 58 (Ser-58) is a Phosphoserine. The cysteines at positions 66 and 185 are disulfide-linked. His-96 contributes to the Cu(2+) binding site. Position 130 is a phosphoserine (Ser-130). Residues His-171 and Gln-180 each contribute to the O2 site. Tyr-182 contacts Cu(2+). The segment at 236-265 (TSPAVANTPYPTTATWNTALQPSTVPTAVP) is X282 extension. The short motif at 268-275 (GTPGIGKA) is the 9res motif element.

Belongs to the polysaccharide monooxygenase AA9 family. Requires Cu(2+) as cofactor.

It is found in the secreted. It carries out the reaction [(1-&gt;4)-beta-D-glucosyl]n+m + reduced acceptor + O2 = 4-dehydro-beta-D-glucosyl-[(1-&gt;4)-beta-D-glucosyl]n-1 + [(1-&gt;4)-beta-D-glucosyl]m + acceptor + H2O.. In terms of biological role, lytic polysaccharide monooxygenase (LPMO) that depolymerizes crystalline and amorphous polysaccharides via the oxidation of scissile alpha- or beta-(1-4)-glycosidic bonds, yielding C1 oxidation products. Catalysis by LPMOs requires the reduction of the active-site copper from Cu(II) to Cu(I) by a reducing agent and H(2)O(2) or O(2) as a cosubstrate. Shows only weak binding properties to cellulose, and low cellulolytic oxidative activity which questions the involvement of X282 extension-containing AA9 proteins in the degradation of plant cell wall and opens new avenues as to the divergence of function of some AA9 members. The chain is AA9 family lytic polysaccharide monooxygenase AA9-X282 from Trametes coccinea (strain BRFM310) (Pycnoporus coccineus).